The chain runs to 287 residues: Phospholipid phosphatase 2 (287 aa).

At 1–4 (MERR) the chain is on the cytoplasmic side. Residues 5-25 (WVFVLLDVLCVLVAALPCAIL) form a helical membrane-spanning segment. At 26–51 (TFVNTPYKRGFYCGDDSIRYPYRPDT) the chain is on the lumenal side. A helical transmembrane segment spans residues 52–72 (ITHGLMAGVIITATVILVSAG). The Cytoplasmic segment spans residues 73 to 87 (EAYLVYTDRLYSRSD). A helical transmembrane segment spans residues 88–108 (FNNYLAALYKVVGTFLFGAAV). Residues 109-161 (SQSLTDLAKYMTGRLRPNFLAVCDPDWSRVNCSAYVQVEVCRGSSANVTESRL) lie on the Lumenal side of the membrane. The segment at 117-125 (KYMTGRLRP) is phosphatase sequence motif I. N-linked (GlcNAc...) asparagine glycans are attached at residues Asn139 and Asn155. A helical transmembrane segment spans residues 162–182 (SFYSGHSSFGMYCMVFLALYV). The segment at 164–167 (YSGH) is phosphatase sequence motif II. Catalysis depends on His167, which acts as the Proton donors. At 183–193 (QARLCWKWARL) the chain is on the cytoplasmic side. A helical transmembrane segment spans residues 194–211 (LRPTVQFFLVAFALYVGY). Residues 212–218 (TRVSDHK) lie on the Lumenal side of the membrane. The segment at 212–223 (TRVSDHKHHWSD) is phosphatase sequence motif III. The active-site Nucleophile is His219. A helical membrane pass occupies residues 219–239 (HHWSDVLVGLLQGALVASLTV). Topologically, residues 240-287 (RYISDFFKARPPQHCPEEEDLERKPSLSLTLALGETDCNHYGYPVSSS) are cytoplasmic.

It belongs to the PA-phosphatase related phosphoesterase family. In terms of assembly, forms functional homodimers and homooligomers. Can also form heterooligomers with PLPP1 and PLPP3. In terms of processing, N-glycosylated.

It localises to the membrane. The protein resides in the cell membrane. Its subcellular location is the early endosome membrane. The protein localises to the endoplasmic reticulum membrane. It catalyses the reaction a 1,2-diacyl-sn-glycero-3-phosphate + H2O = a 1,2-diacyl-sn-glycerol + phosphate. The catalysed reaction is 1,2-dihexadecanoyl-sn-glycero-3-phosphate + H2O = 1,2-dihexadecanoyl-sn-glycerol + phosphate. It carries out the reaction 1,2-di-(9Z-octadecenoyl)-sn-glycero-3-phosphate + H2O = 1,2-di-(9Z-octadecenoyl)-sn-glycerol + phosphate. The enzyme catalyses a monoacyl-sn-glycero-3-phosphate + H2O = a monoacylglycerol + phosphate. It catalyses the reaction (9Z)-octadecenoyl-sn-glycero-3-phosphate + H2O = (9Z-octadecenoyl)-glycerol + phosphate. The catalysed reaction is sphing-4-enine 1-phosphate + H2O = sphing-4-enine + phosphate. It carries out the reaction an N-acylsphing-4-enine 1-phosphate + H2O = an N-acylsphing-4-enine + phosphate. The enzyme catalyses N-(octanoyl)-sphing-4-enine-1-phosphate + H2O = N-octanoylsphing-4-enine + phosphate. It catalyses the reaction N-(9Z-octadecenoyl)-ethanolamine phosphate + H2O = N-(9Z-octadecenoyl) ethanolamine + phosphate. Its pathway is lipid metabolism; phospholipid metabolism. With respect to regulation, magnesium-independent phospholipid phosphatase. Insensitive to N-ethylmaleimide. In terms of biological role, magnesium-independent phospholipid phosphatase that catalyzes the dephosphorylation of a variety of glycerolipid and sphingolipid phosphate esters including phosphatidate/PA, lysophosphatidate/LPA, sphingosine 1-phosphate/S1P and ceramide 1-phosphate/C1P. Has no apparent extracellular phosphatase activity and therefore most probably acts intracellularly. Also acts on N-oleoyl ethanolamine phosphate/N-(9Z-octadecenoyl)-ethanolamine phosphate, a potential physiological compound. Through dephosphorylation of these bioactive lipid mediators produces new bioactive compounds and may regulate signal transduction in different cellular processes. Indirectly regulates, for instance, cell cycle G1/S phase transition through its phospholipid phosphatase activity. The chain is Phospholipid phosphatase 2 from Bos taurus (Bovine).